Here is a 141-residue protein sequence, read N- to C-terminus: MAIERTLSIIKPDAVAKNVIGQIYSRFEGAGLKIVAARMTQLSRAEAEGFYAVHSARPFFKDLVDFMISGPVIIQVLEGENAIIKHRDLMGATDPKKADKGTIRADFADSIDANAVHGSDAEETAKVEIAYYFPALNVYSR.

ATP is bound by residues Lys-11, Phe-59, Arg-87, Thr-93, Arg-104, and Asn-114. Catalysis depends on His-117, which acts as the Pros-phosphohistidine intermediate.

The protein belongs to the NDK family. In terms of assembly, homotetramer. Requires Mg(2+) as cofactor.

It is found in the cytoplasm. It carries out the reaction a 2'-deoxyribonucleoside 5'-diphosphate + ATP = a 2'-deoxyribonucleoside 5'-triphosphate + ADP. It catalyses the reaction a ribonucleoside 5'-diphosphate + ATP = a ribonucleoside 5'-triphosphate + ADP. Major role in the synthesis of nucleoside triphosphates other than ATP. The ATP gamma phosphate is transferred to the NDP beta phosphate via a ping-pong mechanism, using a phosphorylated active-site intermediate. The protein is Nucleoside diphosphate kinase of Janthinobacterium sp. (strain Marseille) (Minibacterium massiliensis).